Consider the following 295-residue polypeptide: NAD kinase (295 aa).

Asp72 (proton acceptor) is an active-site residue. Residues 72-73 (DG), 146-147 (ND), Arg157, Lys174, Asp176, 187-192 (TAYALS), and Gln247 contribute to the NAD(+) site.

The protein belongs to the NAD kinase family. A divalent metal cation serves as cofactor.

It localises to the cytoplasm. It carries out the reaction NAD(+) + ATP = ADP + NADP(+) + H(+). Involved in the regulation of the intracellular balance of NAD and NADP, and is a key enzyme in the biosynthesis of NADP. Catalyzes specifically the phosphorylation on 2'-hydroxyl of the adenosine moiety of NAD to yield NADP. This Azotobacter vinelandii (strain DJ / ATCC BAA-1303) protein is NAD kinase.